Consider the following 42-residue polypeptide: Photosystem I reaction center subunit IX (42 aa).

A helical membrane pass occupies residues 7-27 (YLSTAPVLSALWFAILAGLLI).

The protein belongs to the PsaJ family.

It localises to the plastid. The protein localises to the chloroplast thylakoid membrane. Functionally, may help in the organization of the PsaE and PsaF subunits. The sequence is that of Photosystem I reaction center subunit IX from Chlorokybus atmophyticus (Soil alga).